Consider the following 325-residue polypeptide: Probable 4-hydroxy-tetrahydrodipicolinate reductase 2, chloroplastic (325 aa).

Residues 1 to 32 (MLSLRPPCTLSPAPWRRRRTLHGAAGTPQRVS) constitute a chloroplast transit peptide. NAD(+) contacts are provided by residues 57-62 (GCTGKM), 149-151 (GTT), and 172-175 (SPQM). His208 serves as the catalytic Proton donor/acceptor. The active-site Proton donor is the Lys212. Position 217–218 (217–218 (GT)) interacts with (S)-2,3,4,5-tetrahydrodipicolinate.

Belongs to the DapB family.

It is found in the plastid. It localises to the chloroplast. The catalysed reaction is (S)-2,3,4,5-tetrahydrodipicolinate + NAD(+) + H2O = (2S,4S)-4-hydroxy-2,3,4,5-tetrahydrodipicolinate + NADH + H(+). It catalyses the reaction (S)-2,3,4,5-tetrahydrodipicolinate + NADP(+) + H2O = (2S,4S)-4-hydroxy-2,3,4,5-tetrahydrodipicolinate + NADPH + H(+). It functions in the pathway amino-acid biosynthesis; L-lysine biosynthesis via DAP pathway; (S)-tetrahydrodipicolinate from L-aspartate: step 4/4. Its function is as follows. Catalyzes the conversion of 4-hydroxy-tetrahydrodipicolinate (HTPA) to tetrahydrodipicolinate. The protein is Probable 4-hydroxy-tetrahydrodipicolinate reductase 2, chloroplastic (DAPB2) of Oryza sativa subsp. japonica (Rice).